The following is a 2410-amino-acid chain: Coprinoferrin synthetase (2410 aa).

The adenylation 1 stretch occupies residues 237 to 646; it reads LERRAKTNPH…GRIDTQIKVR (410 aa). In terms of domain architecture, Carrier 1 spans 783–860; the sequence is RDCTPLEAEV…DIAQLVHVST (78 aa). At S820 the chain carries O-(pantetheine 4'-phosphoryl)serine. The segment at 891–1260 is condensation 1; it reads DILPPFPVQE…SVEAVVNVHD (370 aa). A disordered region spans residues 1298–1317; that stretch reads ELPLPSRRSPEPVRKVNDDE. Positions 1305–1314 are enriched in basic and acidic residues; it reads RSPEPVRKVN. The 77-residue stretch at 1324–1400 folds into the Carrier 2 domain; the sequence is LLDPVVVADL…RLARVVSNNK (77 aa). S1361 carries the post-translational modification O-(pantetheine 4'-phosphoryl)serine. The tract at residues 1436–1839 is condensation 2; it reads IIPSTALQSG…RIGRTFSVPS (404 aa). In terms of domain architecture, Carrier 3 spans 1858–1932; sequence VQAGIIHPVL…DLVLQATEIK (75 aa). Position 1893 is an O-(pantetheine 4'-phosphoryl)serine (S1893). Residues 1992 to 2315 form a condensation 3 region; the sequence is FQYLFTFKLP…TPIFNVNVNV (324 aa).

Belongs to the NRP synthetase family.

It participates in siderophore biosynthesis. Its function is as follows. Nonribosomal peptide synthase; part of the gene cluster that mediates the biosynthesis of coprinoferrin, an acylated tripeptide hydroxamate siderophore. The biosynthesis of coprinoferrin depends on the hydroxylation of ornithine to N(5)-hydroxyornithine, catalyzed by the monooxygenase cpf2. The second step, the acylation of N(5)-hydroxy-L-ornithine to yield N(5)-hexanoyl-N(5)-hydroxyl-L-ornithine is catalyzed by a not yet identified acyltransferase. Finally, assembly of coprinoferrin is catalyzed by the nonribosomal peptide synthase (NRPS) cpf1 via amide bond formation between three N(5)-hexanoyl-N(5)-hydroxyl-L-ornithine molecules to release the linear trimer. Interestingly, proteins seemingly not directly related to biosynthesis, such as transcription factors, replication factors, and autophagy-related proteins, are conserved among the clusters homologous to the coprinoferrin cluster, suggesting that the cluster may also play developmental and cell biological functions. In Coprinopsis cinerea (strain Okayama-7 / 130 / ATCC MYA-4618 / FGSC 9003) (Inky cap fungus), this protein is Coprinoferrin synthetase.